The sequence spans 183 residues: Protein CT_584 (183 aa).

It belongs to the chlamydial CPn_0803/CT_584/TC_0873 family.

The protein is Protein CT_584 of Chlamydia trachomatis serovar D (strain ATCC VR-885 / DSM 19411 / UW-3/Cx).